The following is a 352-amino-acid chain: Phenylalanine--tRNA ligase alpha subunit (352 aa).

Glu-258 contributes to the Mg(2+) binding site.

Belongs to the class-II aminoacyl-tRNA synthetase family. Phe-tRNA synthetase alpha subunit type 1 subfamily. As to quaternary structure, tetramer of two alpha and two beta subunits. Mg(2+) serves as cofactor.

Its subcellular location is the cytoplasm. It carries out the reaction tRNA(Phe) + L-phenylalanine + ATP = L-phenylalanyl-tRNA(Phe) + AMP + diphosphate + H(+). The chain is Phenylalanine--tRNA ligase alpha subunit from Staphylococcus epidermidis (strain ATCC 35984 / DSM 28319 / BCRC 17069 / CCUG 31568 / BM 3577 / RP62A).